Consider the following 360-residue polypeptide: DNA replication and repair protein RecF (360 aa).

30–37 (GQNGSGKT) is a binding site for ATP.

The protein belongs to the RecF family.

The protein localises to the cytoplasm. Its function is as follows. The RecF protein is involved in DNA metabolism; it is required for DNA replication and normal SOS inducibility. RecF binds preferentially to single-stranded, linear DNA. It also seems to bind ATP. The sequence is that of DNA replication and repair protein RecF from Shewanella sp. (strain MR-7).